Here is a 488-residue protein sequence, read N- to C-terminus: MSQAVESRTRIKSERYESGVIPYAKMGYWDPEYVIKDTDILALFRCTPQPGVDPVEAAAALAGESSTATWTVVWTDLLTACDLYRAKAFRVDPVPSAADTYFCYIAYDIDLFEEGSLANLTASIIGNIFGFKAVKALRLEDMRFPVALLKTYQGPATGVVVERERMDKFGRPLLGATVKPKLGLSGKNYGRVVFEGLKGGLDFLKDDENINSQPFMRYRERFLYSMEGVNHAACLTGEVKGHYLNTTAATMEDMYERANFARDLGSVIVMIDLVIGYTAIQSMGKWSRDNDVILHLHRAGNSTYSRQKNHGMNFRVICKWMRMSGCDHIHAGTVVGKLEGDPLMIKGFYNTLLDTKTEVNLPQGLFFAQDWASLRKCVPVASGGIHCGQMHQLINYLGDDVVLQFGGGTIGHPDGIQAGATANRVALECMVLARNEGRDYIAEGPQILRDAAKTCGPLQTALDLWKDITFNYASTDTADFVETATANV.

N127 and T177 together coordinate substrate. The active-site Proton acceptor is the K179. K181 is a substrate binding site. K205, D207, and E208 together coordinate Mg(2+). K205 bears the N6-carboxylysine mark. H297 (proton acceptor) is an active-site residue. Residues R298, H330, and S382 each contribute to the substrate site.

It belongs to the RuBisCO large chain family. Type I subfamily. In terms of assembly, heterohexadecamer of 8 large chains and 8 small chains. It depends on Mg(2+) as a cofactor.

It is found in the plastid. Its subcellular location is the chloroplast. It catalyses the reaction 2 (2R)-3-phosphoglycerate + 2 H(+) = D-ribulose 1,5-bisphosphate + CO2 + H2O. The catalysed reaction is D-ribulose 1,5-bisphosphate + O2 = 2-phosphoglycolate + (2R)-3-phosphoglycerate + 2 H(+). Functionally, ruBisCO catalyzes two reactions: the carboxylation of D-ribulose 1,5-bisphosphate, the primary event in carbon dioxide fixation, as well as the oxidative fragmentation of the pentose substrate in the photorespiration process. Both reactions occur simultaneously and in competition at the same active site. The protein is Ribulose bisphosphate carboxylase large chain of Emiliania huxleyi (Coccolithophore).